The primary structure comprises 168 residues: Nicotinamide-nucleotide adenylyltransferase (168 aa).

The protein belongs to the archaeal NMN adenylyltransferase family.

Its subcellular location is the cytoplasm. It carries out the reaction beta-nicotinamide D-ribonucleotide + ATP + H(+) = diphosphate + NAD(+). It participates in cofactor biosynthesis; NAD(+) biosynthesis; NAD(+) from nicotinamide D-ribonucleotide: step 1/1. This Methanosphaerula palustris (strain ATCC BAA-1556 / DSM 19958 / E1-9c) protein is Nicotinamide-nucleotide adenylyltransferase.